The primary structure comprises 423 residues: Transmembrane protease serine 11E (423 aa).

The Cytoplasmic segment spans residues 1–18; it reads MYRSCVVRARKRTCVEPW. A helical; Signal-anchor for type II membrane protein transmembrane segment spans residues 19–39; the sequence is VIGIISFLSLIVLAVCIGLTV. Residues 40 to 423 are Extracellular-facing; that stretch reads HYVRYNHRRT…RHWIASNTGI (384 aa). An SEA domain is found at 48-166; that stretch reads RTYNYYSTLS…ESVKIKKINK (119 aa). N-linked (GlcNAc...) asparagine glycosylation is found at Asn74, Asn165, Asn182, and Asn223. Cystine bridges form between Cys176–Cys297, Cys217–Cys233, Cys342–Cys358, and Cys369–Cys398. Residues 192 to 422 enclose the Peptidase S1 domain; sequence IVGGTPVEEE…FRHWIASNTG (231 aa). Residues His232 and Asp277 each act as charge relay system in the active site. Residue Ser373 is the Charge relay system of the active site.

It belongs to the peptidase S1 family. In terms of assembly, forms a heterodimer with SERPINA5 and SERPINE1. N-glycosylated. Expressed in epidermal, oral and male reproductive tissues.

Its subcellular location is the cell membrane. It localises to the secreted. Inhibited by SERPINA5. Serine protease which possesses both gelatinolytic and caseinolytic activities. Shows a preference for Arg in the P1 position. In Mus musculus (Mouse), this protein is Transmembrane protease serine 11E (Tmprss11e).